A 375-amino-acid chain; its full sequence is MKYITEGNTKLKIPEDATISKKDKIFYNPIMEVNRDISVSIVQSFLNKYDRDEFFICDPLGGSGARGLRYANELKINSGTGAPHITIGDINPNAISLAQENAKLNNLNNVNIVHKDANVLLSENFRKFNVVDIDPFGAPSPYLDSAIRSIITKNGILCMTATDTAVLYGSYRKTCIRNYDATPLKGNKELAIRLLVGHAIRMASKYDIGLKPIFSHFTAHYVRTFLMTERGAKKADEAVDKLGYVKNIEEEYIIKSRKEGNSDGFCGLYYLDNLTDENITKDAIKIAEERNYSKESVKVMKTVYEESLINNVGCYDVHKICKNIKKKVPPVDILMSGLNEMGFNACRTHHNPHSIKSDAKLIDIVEFIYKYDGNK.

Residues 2-368 form the Trm1 methyltransferase domain; the sequence is KYITEGNTKL…AKLIDIVEFI (367 aa). S-adenosyl-L-methionine-binding residues include R35, R66, D89, D116, and A117.

The protein belongs to the class I-like SAM-binding methyltransferase superfamily. Trm1 family.

It catalyses the reaction guanosine(26) in tRNA + 2 S-adenosyl-L-methionine = N(2)-dimethylguanosine(26) in tRNA + 2 S-adenosyl-L-homocysteine + 2 H(+). Its function is as follows. Dimethylates a single guanine residue at position 26 of a number of tRNAs using S-adenosyl-L-methionine as donor of the methyl groups. This Methanococcus aeolicus (strain ATCC BAA-1280 / DSM 17508 / OCM 812 / Nankai-3) protein is tRNA (guanine(26)-N(2))-dimethyltransferase.